The chain runs to 465 residues: 5'-adenylylsulfate reductase 1, chloroplastic (465 aa).

The N-terminal 53 residues, 1 to 53 (MAMSVNVSSSSSSGIINSRFGVSLEPKVSQIGSLRLLDRVHVAPVSLNLSGKR), are a transit peptide targeting the chloroplast. Residues 73-327 (LAATMVAEIA…KAKECGLHKG (255 aa)) form a reductase domain region. One can recognise a Thioredoxin domain in the interval 344–465 (SAVADIFKSE…SLTSFLNLVR (122 aa)). Active-site nucleophile residues include C385 and C388. C385 and C388 form a disulfide bridge.

It belongs to the APS reductase family. [4Fe-4S] cluster serves as cofactor. Leaves, roots and stem.

The protein resides in the plastid. Its subcellular location is the chloroplast. The catalysed reaction is glutathione disulfide + sulfite + AMP + 2 H(+) = adenosine 5'-phosphosulfate + 2 glutathione. With respect to regulation, stimulated by sodium sulfate &gt; ammonium sulfate and is sensitive to inactivation by 5'AMP. In terms of biological role, reduces sulfate for Cys biosynthesis. Substrate preference is adenosine-5'-phosphosulfate (APS) &gt;&gt; 3'-phosphoadenosine-5'-phosphosulfate (PAPS). Uses glutathione or DTT as source of protons. The chain is 5'-adenylylsulfate reductase 1, chloroplastic (APR1) from Arabidopsis thaliana (Mouse-ear cress).